The primary structure comprises 604 residues: Glutamine--fructose-6-phosphate aminotransferase [isomerizing] (604 aa).

Cys2 functions as the Nucleophile; for GATase activity in the catalytic mechanism. In terms of domain architecture, Glutamine amidotransferase type-2 spans 2-218; it reads CGIVGVVGNR…DKELVILTKD (217 aa). SIS domains lie at 284 to 423 and 456 to 594; these read IVKT…ANGK and VEKL…VDKP. Lys599 acts as the For Fru-6P isomerization activity in catalysis.

Homodimer.

It is found in the cytoplasm. It carries out the reaction D-fructose 6-phosphate + L-glutamine = D-glucosamine 6-phosphate + L-glutamate. Its function is as follows. Catalyzes the first step in hexosamine metabolism, converting fructose-6P into glucosamine-6P using glutamine as a nitrogen source. This Streptococcus pyogenes serotype M6 (strain ATCC BAA-946 / MGAS10394) protein is Glutamine--fructose-6-phosphate aminotransferase [isomerizing].